We begin with the raw amino-acid sequence, 248 residues long: 2,3-bisphosphoglycerate-dependent phosphoglycerate mutase (248 aa).

Substrate contacts are provided by residues 8-15 (RHGESTWN), 21-22 (TG), Arg-60, 87-90 (EKHY), Lys-98, 114-115 (RR), and 183-184 (GN). His-9 serves as the catalytic Tele-phosphohistidine intermediate. Glu-87 acts as the Proton donor/acceptor in catalysis.

This sequence belongs to the phosphoglycerate mutase family. BPG-dependent PGAM subfamily.

The catalysed reaction is (2R)-2-phosphoglycerate = (2R)-3-phosphoglycerate. It participates in carbohydrate degradation; glycolysis; pyruvate from D-glyceraldehyde 3-phosphate: step 3/5. Functionally, catalyzes the interconversion of 2-phosphoglycerate and 3-phosphoglycerate. This Elusimicrobium minutum (strain Pei191) protein is 2,3-bisphosphoglycerate-dependent phosphoglycerate mutase.